The following is a 330-amino-acid chain: Putative aminohydrolase AF_1775 (330 aa).

Residues H54, H56, H181, and D253 each contribute to the Zn(2+) site.

Belongs to the metallo-dependent hydrolases superfamily. ATZ/TRZ family.

The polypeptide is Putative aminohydrolase AF_1775 (Archaeoglobus fulgidus (strain ATCC 49558 / DSM 4304 / JCM 9628 / NBRC 100126 / VC-16)).